Here is a 332-residue protein sequence, read N- to C-terminus: GTP 3',8-cyclase (332 aa).

Residues 9-220 (RFARKVDYLR…DQVRERIAER (212 aa)) form the Radical SAM core domain. Arg-18 contributes to the GTP binding site. Cys-25 and Cys-29 together coordinate [4Fe-4S] cluster. Tyr-31 serves as a coordination point for S-adenosyl-L-methionine. Cys-32 contacts [4Fe-4S] cluster. Residue Arg-67 participates in GTP binding. Gly-71 contributes to the S-adenosyl-L-methionine binding site. Thr-98 contributes to the GTP binding site. Position 122 (Ser-122) interacts with S-adenosyl-L-methionine. Lys-159 serves as a coordination point for GTP. Met-193 contributes to the S-adenosyl-L-methionine binding site. Cys-258 and Cys-261 together coordinate [4Fe-4S] cluster. 263–265 (RVR) contributes to the GTP binding site. Cys-275 is a binding site for [4Fe-4S] cluster.

Belongs to the radical SAM superfamily. MoaA family. As to quaternary structure, monomer and homodimer. It depends on [4Fe-4S] cluster as a cofactor.

It carries out the reaction GTP + AH2 + S-adenosyl-L-methionine = (8S)-3',8-cyclo-7,8-dihydroguanosine 5'-triphosphate + 5'-deoxyadenosine + L-methionine + A + H(+). It participates in cofactor biosynthesis; molybdopterin biosynthesis. Functionally, catalyzes the cyclization of GTP to (8S)-3',8-cyclo-7,8-dihydroguanosine 5'-triphosphate. The protein is GTP 3',8-cyclase of Pseudomonas savastanoi pv. phaseolicola (strain 1448A / Race 6) (Pseudomonas syringae pv. phaseolicola (strain 1448A / Race 6)).